Consider the following 459-residue polypeptide: NADH oxidase (459 aa).

Residue Asn-10 coordinates FAD. Catalysis depends on His-11, which acts as the Proton acceptor. FAD-binding residues include Ala-12, Asp-34, Gln-35, Cys-44, Val-81, Ala-110, Ser-113, Lys-143, and Tyr-172. Cys-44 functions as the Redox-active in the catalytic mechanism. Cys-44 is modified (cysteine sulfinic acid (-SO2H)). Residues Ile-173, Asp-192, Tyr-201, and Gly-256 each coordinate NAD(+). Asp-294 serves as a coordination point for FAD. NAD(+) is bound at residue Ala-310. Residues Leu-311, Ala-312, and Ser-313 each contribute to the FAD site. Gly-341 is an NAD(+) binding site. Phe-439 is a binding site for FAD.

Belongs to the class-III pyridine nucleotide-disulfide oxidoreductase family. The cofactor is FAD.

The protein localises to the secreted. Its subcellular location is the cell wall. The enzyme catalyses 2 NADH + O2 + 2 H(+) = 2 NAD(+) + 2 H2O. Functionally, catalyzes the four-electron reduction of molecular oxygen to water. Plays a role in redox balance maintenance. May be involved in mediating bacterial adhesion to host cells. May be considered a potential virulence factor. In Streptococcus pneumoniae serotype 4 (strain ATCC BAA-334 / TIGR4), this protein is NADH oxidase.